We begin with the raw amino-acid sequence, 524 residues long: Probable inorganic phosphate transporter 1-2 (524 aa).

The Cytoplasmic portion of the chain corresponds to Met-1–Ala-24. A helical transmembrane segment spans residues Ile-25–Val-45. The Extracellular portion of the chain corresponds to Thr-46 to Ala-70. A helical membrane pass occupies residues Ala-71 to Leu-91. Residues Gly-92–Lys-99 are Cytoplasmic-facing. The helical transmembrane segment at Val-100 to Gly-120 threads the bilayer. Over Asn-121 to Cys-131 the chain is Extracellular. The chain crosses the membrane as a helical span at residues Phe-132–Met-152. Topologically, residues Ser-153 to Arg-161 are cytoplasmic. A helical transmembrane segment spans residues Gly-162–Val-182. The Extracellular portion of the chain corresponds to Ala-183–Val-211. The chain crosses the membrane as a helical span at residues Asp-212–Trp-232. At Arg-233 to Arg-292 the chain is on the cytoplasmic side. The chain crosses the membrane as a helical span at residues His-293–Ser-313. At Gln-314–Thr-348 the chain is on the extracellular side. A helical membrane pass occupies residues Leu-349 to Ile-369. The Cytoplasmic portion of the chain corresponds to Gly-370 to Arg-371. The chain crosses the membrane as a helical span at residues Phe-372–Pro-392. Residues Tyr-393–Arg-402 lie on the Extracellular side of the membrane. The chain crosses the membrane as a helical span at residues Ile-403–Thr-423. The Cytoplasmic segment spans residues Thr-424–His-441. Residues Gly-442–Ala-462 traverse the membrane as a helical segment. The Extracellular portion of the chain corresponds to Ala-463–Ser-484. The chain crosses the membrane as a helical span at residues Leu-485 to Pro-505. Residues Lys-506–Lys-524 are Cytoplasmic-facing.

It belongs to the major facilitator superfamily. Phosphate:H(+) symporter (TC 2.A.1.9) family. As to expression, root specific, especially in trichoblasts. In mature plants, localized in root cortical cells and young lateral roots.

It localises to the membrane. In terms of biological role, high-affinity transporter for external inorganic phosphate. This Arabidopsis thaliana (Mouse-ear cress) protein is Probable inorganic phosphate transporter 1-2 (PHT1-2).